We begin with the raw amino-acid sequence, 514 residues long: Uridylate cyclase (514 aa).

2 consecutive Guanylate cyclase domains span residues 49–190 (VHMY…AKLA) and 286–428 (VSLY…EKRQ). Residues Tyr52, Arg105, Phe178, 184-188 (NHAAK), and 291-296 (DIDGFT) contribute to the a ribonucleoside 5'-triphosphate site. Ca(2+)-binding residues include Asp291, Ile292, and Asp339. Position 291 (Asp291) interacts with Mn(2+). Residues 495-514 (IRADERQVQPHSRQKVDGSR) form a disordered region. The segment covering 496–514 (RADERQVQPHSRQKVDGSR) has biased composition (basic and acidic residues).

It belongs to the adenylyl cyclase class-4/guanylyl cyclase family. Pyrimidine cyclase subfamily. In terms of assembly, monomer. A divalent metal cation serves as cofactor.

The protein resides in the cytoplasm. The enzyme catalyses UTP = 3',5'-cyclic UMP + diphosphate. Pycsar (pyrimidine cyclase system for antiphage resistance) provides immunity against bacteriophage. The pyrimidine cyclase (PycC) synthesizes cyclic nucleotides in response to infection; these serve as specific second messenger signals. The signals activate the adjacent effector, leading to bacterial cell death and abortive phage infection. A clade A Pycsar system. In terms of biological role, the pyrimidine cyclase gene of a two-gene Pycsar system, generates cyclic UMP (cUMP) from UTP, has little to no activity on ATP, CTP or GTP. Expression of this and adjacent effector PaPycTIR (AC P0DV41) probably confers resistance to bacteriophage. The genes are probably only expressed in response to bacteriophage infection. Does not have adenylyl or guanylyl cyclase activity. In Pseudomonas aeruginosa, this protein is Uridylate cyclase.